We begin with the raw amino-acid sequence, 298 residues long: Ethanolamine ammonia-lyase small subunit (298 aa).

Residues 17–37 (MGQDVPQPVAPSKQEGAKPQC) form a disordered region. Adenosylcob(III)alamin contacts are provided by Val210, Glu231, and Cys261.

Belongs to the EutC family. The basic unit is a heterodimer which dimerizes to form tetramers. The heterotetramers trimerize; 6 large subunits form a core ring with 6 small subunits projecting outwards. Adenosylcob(III)alamin serves as cofactor.

It localises to the bacterial microcompartment. It carries out the reaction ethanolamine = acetaldehyde + NH4(+). It participates in amine and polyamine degradation; ethanolamine degradation. Catalyzes the deamination of various vicinal amino-alcohols to oxo compounds. Allows this organism to utilize ethanolamine as the sole source of nitrogen and carbon in the presence of external vitamin B12. The protein is Ethanolamine ammonia-lyase small subunit of Salmonella paratyphi A (strain ATCC 9150 / SARB42).